Here is a 297-residue protein sequence, read N- to C-terminus: Formylmethanofuran--tetrahydromethanopterin formyltransferase (297 aa).

Belongs to the FTR family. In terms of assembly, homotetramer.

Its subcellular location is the cytoplasm. It catalyses the reaction N-formylmethanofuran + 5,6,7,8-tetrahydromethanopterin + H(+) = N(5)-formyl-5,6,7,8-tetrahydromethanopterin + methanofuran. Its pathway is metabolic intermediate metabolism; lactate oxidation. Catalyzes the transfer of a formyl group from 5-formyl tetrahydromethanopterin (5-formyl-H(4)MPT) to methanofuran (MFR) to produce formylmethanofuran (formyl-MFR) and tetrahydromethanopterin (H(4)MPT). In Archaeoglobus fulgidus (strain ATCC 49558 / DSM 4304 / JCM 9628 / NBRC 100126 / VC-16), this protein is Formylmethanofuran--tetrahydromethanopterin formyltransferase.